A 785-amino-acid chain; its full sequence is MRFLKSALPFVASALSLLSVQAAARSQEPSAIQHVSILEHAVINTPSHEVDHLTDFDVTFELPDKHQTIKLELEPNHDILADDAYVQYLDAEGNVHREEPIQRHEHKVFKGRSLLRRDNGLWRPVGWARVYVQRDGSKPLFEGVFSIDNDNHHVELKSTYLQKKRVEDASIPDRKDEYMVVYRDSDMIRQVRSELKRSLISSSSCQAEKLGFNSDPQHPIFRSEFQDMDLGMSSYGSMSLNSLFGLSKRQSDIGGVSGNAGGVNLAQTIGSTSGCPKTKQVALVGIAADCSFRASFDNDDAAKQWIINMVNSASDVYEKSFNISIGLRNLTMTDKTCPETAPASTQWNMPCDQSNITQRLNLFSQWRGQQSDDNAYWTLMSNCPTGSEVGLAWLGQLCNTEVTGDGSNSVSGTNVVVRVSGGGWQVFAHESGHTFGAVHDCDSMTCAQNLEASSQCCPYNRGTCDANGKYIMNPSTGADITAFSPCTIGNICSALGRNSVKSSCLSDNRNVVTYTGSQCGNGIVEAGEDCDCGGESSCGDNPCCDAKTCKFKSGAVCDDANDSCCSQCQFSPAGTVCRASLGECDLQETCTGNSSTCPADSFKKDGEKCGDTSGLTCASGQCTSRDYQCRTVMGSLIHDNNTYACPQFDSSCELICTSPSLGSCFSINQNFLDGTPCGSGGYCHNGRCDGSNFGSWVEQHKNLVIGVACGVGGLLVLSILWCMINRCRRARTVVKRPPMRPWPGPMPPPPPQMGQWAGPNRGYQGLRAEPPPPYPGPYQSATRYA.

An N-terminal signal peptide occupies residues 1 to 26 (MRFLKSALPFVASALSLLSVQAAARS). Topologically, residues 27–703 (QEPSAIQHVS…GSWVEQHKNL (677 aa)) are extracellular. Residues 279-507 (KQVALVGIAA…NSVKSSCLSD (229 aa)) enclose the Peptidase M12B domain. 3 N-linked (GlcNAc...) asparagine glycosylation sites follow: Asn-322, Asn-329, and Asn-355. 2 cysteine pairs are disulfide-bonded: Cys-398–Cys-492 and Cys-446–Cys-464. Residue His-429 coordinates Zn(2+). Residue Glu-430 is part of the active site. Positions 433 and 439 each coordinate Zn(2+). The region spanning 516–605 (GSQCGNGIVE…TCPADSFKKD (90 aa)) is the Disintegrin domain. Residues Asn-561, Asn-593, and Asn-640 are each glycosylated (N-linked (GlcNAc...) asparagine). Residues Cys-577 and Cys-597 are joined by a disulfide bond. Residues 704–724 (VIGVACGVGGLLVLSILWCMI) form a helical membrane-spanning segment. The Cytoplasmic portion of the chain corresponds to 725-785 (NRCRRARTVV…GPYQSATRYA (61 aa)). The interval 737–785 (PPMRPWPGPMPPPPPQMGQWAGPNRGYQGLRAEPPPPYPGPYQSATRYA) is disordered. Over residues 739 to 752 (MRPWPGPMPPPPPQ) the composition is skewed to pro residues.

Requires Zn(2+) as cofactor.

The protein resides in the membrane. Its function is as follows. Probable zinc protease. In Aspergillus fumigatus (strain ATCC MYA-4609 / CBS 101355 / FGSC A1100 / Af293) (Neosartorya fumigata), this protein is Disintegrin and metalloproteinase domain-containing protein B (ADM-B).